Consider the following 275-residue polypeptide: Membrane protein insertase YidC 2 (275 aa).

An N-terminal signal peptide occupies residues 1 to 21 (MKKKNIILISVLLGALLLLTG). Cys-22 is lipidated: N-palmitoyl cysteine. Residue Cys-22 is the site of S-diacylglycerol cysteine attachment. The next 4 helical transmembrane spans lie at 48 to 68 (FVAK…TLLI), 133 to 153 (QMGC…YYAI), 174 to 194 (MVLA…SMIG), and 212 to 232 (IMIL…WAVG).

The protein belongs to the OXA1/ALB3/YidC family. Type 2 subfamily.

The protein localises to the cell membrane. Its function is as follows. Required for the insertion and/or proper folding and/or complex formation of integral membrane proteins into the membrane. Involved in integration of membrane proteins that insert both dependently and independently of the Sec translocase complex, as well as at least some lipoproteins. The chain is Membrane protein insertase YidC 2 from Listeria monocytogenes serotype 4b (strain F2365).